The chain runs to 98 residues: Co-chaperonin GroES (98 aa).

This sequence belongs to the GroES chaperonin family. As to quaternary structure, heptamer of 7 subunits arranged in a ring. Interacts with the chaperonin GroEL.

The protein resides in the cytoplasm. Its function is as follows. Together with the chaperonin GroEL, plays an essential role in assisting protein folding. The GroEL-GroES system forms a nano-cage that allows encapsulation of the non-native substrate proteins and provides a physical environment optimized to promote and accelerate protein folding. GroES binds to the apical surface of the GroEL ring, thereby capping the opening of the GroEL channel. The chain is Co-chaperonin GroES from Allorhizobium ampelinum (strain ATCC BAA-846 / DSM 112012 / S4) (Agrobacterium vitis (strain S4)).